A 231-amino-acid polypeptide reads, in one-letter code: Large ribosomal subunit protein uL1 (231 aa).

This sequence belongs to the universal ribosomal protein uL1 family. As to quaternary structure, part of the 50S ribosomal subunit.

Functionally, binds directly to 23S rRNA. The L1 stalk is quite mobile in the ribosome, and is involved in E site tRNA release. In terms of biological role, protein L1 is also a translational repressor protein, it controls the translation of the L11 operon by binding to its mRNA. This is Large ribosomal subunit protein uL1 from Chlorobaculum tepidum (strain ATCC 49652 / DSM 12025 / NBRC 103806 / TLS) (Chlorobium tepidum).